The chain runs to 718 residues: Polyribonucleotide nucleotidyltransferase (718 aa).

The Mg(2+) site is built by Asp-493 and Asp-499. The KH domain maps to 560-619 (PRVIKKQIDPDKIRNVIGPGGKMINKIIDETGVKIDIEPDGLIYISSSDAEQAEQAIKAI). The S1 motif domain maps to 629–697 (GEVYLGKVVR…ERGRINLSRK (69 aa)). The interval 695–718 (SRKQALGEEDGKTNNDDKKSTKKT) is disordered. Residues 699–718 (ALGEEDGKTNNDDKKSTKKT) show a composition bias toward basic and acidic residues.

This sequence belongs to the polyribonucleotide nucleotidyltransferase family. Mg(2+) is required as a cofactor.

The protein localises to the cytoplasm. The catalysed reaction is RNA(n+1) + phosphate = RNA(n) + a ribonucleoside 5'-diphosphate. Functionally, involved in mRNA degradation. Catalyzes the phosphorolysis of single-stranded polyribonucleotides processively in the 3'- to 5'-direction. In Natranaerobius thermophilus (strain ATCC BAA-1301 / DSM 18059 / JW/NM-WN-LF), this protein is Polyribonucleotide nucleotidyltransferase.